The following is a 648-amino-acid chain: Macrolide export ATP-binding/permease protein MacB (648 aa).

One can recognise an ABC transporter domain in the interval 6 to 251 (IRVRGVSRAF…GPSAGWRGAI (246 aa)). 42-49 (GASGSGKS) provides a ligand contact to ATP. 4 consecutive transmembrane segments (helical) span residues 273–293 (LLTMLGIIIGIASVAAISALG), 528–548 (VAVISLIVGGIGVMNIMLVSV), 572–592 (FLIEAVMVCLVGGLMGIMLAL), and 613–633 (SIIVAFACSTLIGIVFGFLPA).

Belongs to the ABC transporter superfamily. Macrolide exporter (TC 3.A.1.122) family. In terms of assembly, homodimer.

It localises to the cell inner membrane. Non-canonical ABC transporter that contains transmembrane domains (TMD), which form a pore in the inner membrane, and an ATP-binding domain (NBD), which is responsible for energy generation. Confers resistance against macrolides. The polypeptide is Macrolide export ATP-binding/permease protein MacB (Agrobacterium fabrum (strain C58 / ATCC 33970) (Agrobacterium tumefaciens (strain C58))).